The primary structure comprises 563 residues: Tripeptidyl-peptidase 1 (563 aa).

The signal sequence occupies residues 1–19 (MGLQACLLGLFALILSGKC). A propeptide spans 20 to 195 (SYSPEPDQRR…PEPQVTGTVG (176 aa)) (removed in mature form). The cysteines at positions 111 and 122 are disulfide-linked. Positions 199–563 (GVTPSVIRKR…PALLKTLLNP (365 aa)) constitute a Peptidase S53 domain. N-linked (GlcNAc...) asparagine glycosylation is found at Asn-210 and Asn-222. Active-site charge relay system residues include Glu-272 and Asp-276. Residues Asn-286, Asn-313, and Asn-443 are each glycosylated (N-linked (GlcNAc...) asparagine). 2 disulfide bridges follow: Cys-365-Cys-526 and Cys-522-Cys-537. Residue Ser-475 is the Charge relay system of the active site. Residues Asp-517 and Val-518 each contribute to the Ca(2+) site. The Ca(2+) site is built by Gly-539, Gly-541, and Asp-543.

Monomer. Interacts with CLN5. Interacts with CLN3. Ca(2+) is required as a cofactor. In terms of processing, activated by autocatalytic proteolytical processing upon acidification. N-glycosylation is required for processing and activity.

The protein resides in the lysosome. The protein localises to the melanosome. The enzyme catalyses Release of an N-terminal tripeptide from a polypeptide, but also has endopeptidase activity.. Its function is as follows. Lysosomal serine protease with tripeptidyl-peptidase I activity. May act as a non-specific lysosomal peptidase which generates tripeptides from the breakdown products produced by lysosomal proteinases. Requires substrates with an unsubstituted N-terminus. This Pan troglodytes (Chimpanzee) protein is Tripeptidyl-peptidase 1 (TPP1).